Here is a 100-residue protein sequence, read N- to C-terminus: Small ribosomal subunit protein uS14c (100 aa).

Belongs to the universal ribosomal protein uS14 family. Part of the 30S ribosomal subunit.

It is found in the plastid. In terms of biological role, binds 16S rRNA, required for the assembly of 30S particles. The chain is Small ribosomal subunit protein uS14c (rps14) from Cuscuta reflexa (Southern Asian dodder).